A 124-amino-acid polypeptide reads, in one-letter code: Small ribosomal subunit protein uS10 (124 aa).

This sequence belongs to the universal ribosomal protein uS10 family.

The protein is Small ribosomal subunit protein uS10 (rps20) of Dictyostelium discoideum (Social amoeba).